We begin with the raw amino-acid sequence, 502 residues long: Protein ANKUB1 (502 aa).

This chain is Protein ANKUB1 (ANKUB1), found in Homo sapiens (Human).